A 193-amino-acid polypeptide reads, in one-letter code: Molybdopterin synthase catalytic subunit (193 aa).

Residues 118 to 119, K134, and 141 to 143 each bind substrate; these read HR and KKE. The tract at residues 159–193 is disordered; the sequence is DRTTTDGTTASSPAPATRPAKGGGCCGSKVRANES. Residues 163–178 are compositionally biased toward low complexity; that stretch reads TDGTTASSPAPATRPA.

Belongs to the MoaE family. MOCS2B subfamily. Heterotetramer; composed of 2 small (MOCS2A) and 2 large (MOCS2B) subunits.

The protein localises to the cytoplasm. The catalysed reaction is 2 [molybdopterin-synthase sulfur-carrier protein]-C-terminal-Gly-aminoethanethioate + cyclic pyranopterin phosphate + H2O = molybdopterin + 2 [molybdopterin-synthase sulfur-carrier protein]-C-terminal Gly-Gly + 2 H(+). Its pathway is cofactor biosynthesis; molybdopterin biosynthesis. In terms of biological role, catalytic subunit of the molybdopterin synthase complex, a complex that catalyzes the conversion of precursor Z into molybdopterin. Acts by mediating the incorporation of 2 sulfur atoms from thiocarboxylated MOCS2A into precursor Z to generate a dithiolene group. In Oryza sativa subsp. indica (Rice), this protein is Molybdopterin synthase catalytic subunit.